A 154-amino-acid polypeptide reads, in one-letter code: Lipoprotein signal peptidase (154 aa).

Transmembrane regions (helical) follow at residues 52-72 (ILAG…IGIV) and 85-105 (LGVA…DRAV). Catalysis depends on residues Asp111 and Asp129. A helical membrane pass occupies residues 124 to 144 (IFNIADSSLCVGVMLLFIQML).

It belongs to the peptidase A8 family.

Its subcellular location is the cell membrane. The enzyme catalyses Release of signal peptides from bacterial membrane prolipoproteins. Hydrolyzes -Xaa-Yaa-Zaa-|-(S,diacylglyceryl)Cys-, in which Xaa is hydrophobic (preferably Leu), and Yaa (Ala or Ser) and Zaa (Gly or Ala) have small, neutral side chains.. The protein operates within protein modification; lipoprotein biosynthesis (signal peptide cleavage). In terms of biological role, this protein specifically catalyzes the removal of signal peptides from prolipoproteins. The chain is Lipoprotein signal peptidase from Bacillus subtilis (strain 168).